The sequence spans 444 residues: Pentatricopeptide repeat-containing protein At4g35850, mitochondrial (444 aa).

Residues 1 to 25 (MKFLMQSISGRNRSLVRALVSRRYF) constitute a mitochondrion transit peptide. PPR repeat units follow at residues 40 to 74 (DLSEYNTAVNSVTAQRRHYLLRDVYDDMKLDGVQP), 75 to 109 (TADIFHSFVVGTMKGARLSDAFFFREEMKAMGIAP), 110 to 144 (DVNLYNFLISTCGKCKNGKEAIRVYDEMKRYDVKP), 145 to 179 (NGQTFVCLLNACAVSGQLDLVYAIVRDMTAAGVGL), 255 to 289 (NLTVYHVAFSALADLKDVKATEALLEMLKKDGKDT), and 290 to 325 (DTYCMLQIMRCYLHSQDFENGLKLFQDYMSADKIPA).

This sequence belongs to the PPR family. P subfamily.

The protein resides in the mitochondrion. In Arabidopsis thaliana (Mouse-ear cress), this protein is Pentatricopeptide repeat-containing protein At4g35850, mitochondrial.